A 175-amino-acid polypeptide reads, in one-letter code: Crossover junction endodeoxyribonuclease RuvC (175 aa).

Active-site residues include D8, E69, and D141. Residues D8, E69, and D141 each contribute to the Mg(2+) site.

Belongs to the RuvC family. As to quaternary structure, homodimer which binds Holliday junction (HJ) DNA. The HJ becomes 2-fold symmetrical on binding to RuvC with unstacked arms; it has a different conformation from HJ DNA in complex with RuvA. In the full resolvosome a probable DNA-RuvA(4)-RuvB(12)-RuvC(2) complex forms which resolves the HJ. Mg(2+) serves as cofactor.

The protein localises to the cytoplasm. The enzyme catalyses Endonucleolytic cleavage at a junction such as a reciprocal single-stranded crossover between two homologous DNA duplexes (Holliday junction).. Functionally, the RuvA-RuvB-RuvC complex processes Holliday junction (HJ) DNA during genetic recombination and DNA repair. Endonuclease that resolves HJ intermediates. Cleaves cruciform DNA by making single-stranded nicks across the HJ at symmetrical positions within the homologous arms, yielding a 5'-phosphate and a 3'-hydroxyl group; requires a central core of homology in the junction. The consensus cleavage sequence is 5'-(A/T)TT(C/G)-3'. Cleavage occurs on the 3'-side of the TT dinucleotide at the point of strand exchange. HJ branch migration catalyzed by RuvA-RuvB allows RuvC to scan DNA until it finds its consensus sequence, where it cleaves and resolves the cruciform DNA. In Colwellia psychrerythraea (strain 34H / ATCC BAA-681) (Vibrio psychroerythus), this protein is Crossover junction endodeoxyribonuclease RuvC.